Consider the following 369-residue polypeptide: Chaperone protein DnaJ (369 aa).

Residues 7–73 form the J domain; the sequence is DYYEILGVPR…QKRAMYDRFG (67 aa). The segment at 143 to 225 adopts a CR-type zinc-finger fold; that stretch reads GAEIPVEYER…CGGSGRVLRK (83 aa). Zn(2+) is bound by residues Cys156, Cys159, Cys173, Cys176, Cys199, Cys202, Cys213, and Cys216. CXXCXGXG motif repeat units lie at residues 156-163, 173-180, 199-206, and 213-220; these read CPRCGGTG, CPSCGGTG, CERCGGTG, and CHECGGSG.

This sequence belongs to the DnaJ family. Homodimer. It depends on Zn(2+) as a cofactor.

The protein resides in the cytoplasm. Functionally, participates actively in the response to hyperosmotic and heat shock by preventing the aggregation of stress-denatured proteins and by disaggregating proteins, also in an autonomous, DnaK-independent fashion. Unfolded proteins bind initially to DnaJ; upon interaction with the DnaJ-bound protein, DnaK hydrolyzes its bound ATP, resulting in the formation of a stable complex. GrpE releases ADP from DnaK; ATP binding to DnaK triggers the release of the substrate protein, thus completing the reaction cycle. Several rounds of ATP-dependent interactions between DnaJ, DnaK and GrpE are required for fully efficient folding. Also involved, together with DnaK and GrpE, in the DNA replication of plasmids through activation of initiation proteins. In Thermotoga petrophila (strain ATCC BAA-488 / DSM 13995 / JCM 10881 / RKU-1), this protein is Chaperone protein DnaJ.